The following is a 105-amino-acid chain: Ribonuclease P protein component 4 (105 aa).

Residues C63, C66, C89, and C92 each contribute to the Zn(2+) site.

This sequence belongs to the eukaryotic/archaeal RNase P protein component 4 family. As to quaternary structure, consists of a catalytic RNA component and at least 4-5 protein subunits. The cofactor is Zn(2+).

Its subcellular location is the cytoplasm. It catalyses the reaction Endonucleolytic cleavage of RNA, removing 5'-extranucleotides from tRNA precursor.. Part of ribonuclease P, a protein complex that generates mature tRNA molecules by cleaving their 5'-ends. In Methanoculleus marisnigri (strain ATCC 35101 / DSM 1498 / JR1), this protein is Ribonuclease P protein component 4.